Reading from the N-terminus, the 106-residue chain is Small ribosomal subunit protein uS10 (106 aa).

It belongs to the universal ribosomal protein uS10 family. Part of the 30S ribosomal subunit.

In terms of biological role, involved in the binding of tRNA to the ribosomes. The polypeptide is Small ribosomal subunit protein uS10 (Synechococcus sp. (strain WH7803)).